A 120-amino-acid polypeptide reads, in one-letter code: Large ribosomal subunit protein bL12 (120 aa).

It belongs to the bacterial ribosomal protein bL12 family. In terms of assembly, homodimer. Part of the ribosomal stalk of the 50S ribosomal subunit. Forms a multimeric L10(L12)X complex, where L10 forms an elongated spine to which 2 to 4 L12 dimers bind in a sequential fashion. Binds GTP-bound translation factors.

In terms of biological role, forms part of the ribosomal stalk which helps the ribosome interact with GTP-bound translation factors. Is thus essential for accurate translation. The chain is Large ribosomal subunit protein bL12 from Listeria welshimeri serovar 6b (strain ATCC 35897 / DSM 20650 / CCUG 15529 / CIP 8149 / NCTC 11857 / SLCC 5334 / V8).